The sequence spans 152 residues: Ribonuclease H (152 aa).

The RNase H type-1 domain maps to 6–147 (KKNRVIAYTD…ADELANKAIA (142 aa)). Aspartate 15, glutamate 53, aspartate 75, and aspartate 139 together coordinate Mg(2+).

Belongs to the RNase H family. As to quaternary structure, monomer. Mg(2+) is required as a cofactor.

The protein localises to the cytoplasm. It catalyses the reaction Endonucleolytic cleavage to 5'-phosphomonoester.. Functionally, endonuclease that specifically degrades the RNA of RNA-DNA hybrids. This is Ribonuclease H from Francisella tularensis subsp. tularensis (strain FSC 198).